The chain runs to 556 residues: Methyltransferase/ribosomally synthesized type II borosin cyclic peptide precursor pgiMA1 (556 aa).

Residues 1-250 form a methyltransferase domain region; the sequence is MSSASSDSNT…SCSTLYVPPL (250 aa). Residues arginine 74, tyrosine 78, and tyrosine 100 contribute to the active site. S-adenosyl-L-methionine contacts are provided by tyrosine 100, histidine 102, valine 105, glutamine 174, glycine 212, serine 243, and threonine 244. The tract at residues 251-377 is clasp domain; the sequence is THANKFSGNM…GAVFGVMKLR (127 aa). The segment at 378–386 is precursor leader; the sequence is ASEVANEQG. An N-methylaspartate mark is found at aspartate 421, aspartate 434, aspartate 447, aspartate 460, aspartate 473, aspartate 486, aspartate 499, aspartate 512, aspartate 525, and aspartate 538. A propeptide spanning residues 543-556 is cleaved from the precursor; the sequence is AVPVPDHVAGIPCM.

It in the N-terminal section; belongs to the precorrin methyltransferase family. Homodimer. PgiMA1 automethylates at Asp-421, Asp-434, Asp-447, Asp-460, Asp-473, Asp-486, Asp-499, Asp-512, Asp-525 and Asp-538 before being processed, probably by the M64 family peptidase found in the genes surrounding PgiMA1, to release methylated peptides which then undergos macrocyclization with the N-terminus of the modified core peptides. Peptide backbone alpha-N-methylations change the physicochemical properties of amide bonds to provide structural constraints and other favorable characteristics including biological membrane permeability to peptides.

Its pathway is secondary metabolite biosynthesis. Its function is as follows. Fusion protein of the methyltransferase pgiM1 and 12 type II borosin core peptides; part of the gene cluster that mediates the biosynthesis of a type II borosin, a highly methylated cyclic peptide with potent biological activities. Type II borosins derive from the C-terminus of the fusion protein, and it is the same protein that methylates its own C-terminus using S-adenosyl methionine (SAM). The C-terminus is subsequently cleaved off and macrocyclized by a prolyloligopeptidase to give the final product. The polypeptide is Methyltransferase/ribosomally synthesized type II borosin cyclic peptide precursor pgiMA1 (Phlebiopsis gigantea (strain 11061_1 CR5-6) (White-rot fungus)).